The sequence spans 210 residues: NADH dehydrogenase [ubiquinone] iron-sulfur protein 8, mitochondrial (210 aa).

The transit peptide at 1-34 (MRCLTTPMLLRALAQAARAGPPGGRSLHSSAVAA) directs the protein to the mitochondrion. 4Fe-4S ferredoxin-type domains are found at residues 102 to 131 (RRYPSGEERCIACKLCEAICPAQAITIEAE) and 141 to 170 (TRYDIDMTKCIYCGFCQEACPVDAIVEGPN). Cys-111, Cys-114, Cys-117, Cys-121, Cys-150, Cys-153, Cys-156, and Cys-160 together coordinate [4Fe-4S] cluster.

Belongs to the complex I 23 kDa subunit family. Core subunit of respiratory chain NADH dehydrogenase (Complex I) which is composed of 45 different subunits. This is a component of the iron-sulfur (IP) fragment of the enzyme. Interacts with RAB5IF. It depends on [4Fe-4S] cluster as a cofactor. As to expression, expressed in all tissues with the highest level in heart and skeletal muscle and the lowest level in lung.

It localises to the mitochondrion inner membrane. It catalyses the reaction a ubiquinone + NADH + 5 H(+)(in) = a ubiquinol + NAD(+) + 4 H(+)(out). In terms of biological role, core subunit of the mitochondrial membrane respiratory chain NADH dehydrogenase (Complex I) which catalyzes electron transfer from NADH through the respiratory chain, using ubiquinone as an electron acceptor. Essential for the catalytic activity and assembly of complex I. This is NADH dehydrogenase [ubiquinone] iron-sulfur protein 8, mitochondrial (NDUFS8) from Homo sapiens (Human).